The chain runs to 1239 residues: DNA polymerase subunit gamma-1 (1239 aa).

The disordered stretch occupies residues 1-68; sequence MSRLLWRKVA…PQVLSSEGGQ (68 aa). Low complexity-rich tracts occupy residues 9-36 and 44-60; these read VAGA…SDPS and QQQQ…QQPQ. A does not contribute to polymerase and exonuclease enzymatic activities region spans residues 43–55; sequence QQQQQQQQQQQQQ. Residues 196-200 carry the Exo I motif; sequence VFDVE. Aspartate 198 (exonuclease activity) is an active-site residue. The Exo II signature appears at 267-275; the sequence is VGHNVSFDR. Residue serine 306 coordinates DNA. Residues 318–340 are disordered; the sequence is GKHKVQPPTKQGQKSQRKARRGP. Residues 395-403 carry the Exo III motif; it reads YCAQDVWAT. The interval 506-531 is disordered; it reads EPATASKLPIEGAGAPGDPMDQEDLG. The tract at residues 510–571 is accessory-interacting determinant; it reads ASKLPIEGAG…RPQHLPGHPG (62 aa). Position 579 (arginine 579) interacts with RNA. Position 593 (serine 593) interacts with DNA. Positions 754, 763, and 768 each coordinate RNA. DNA-binding residues include lysine 806 and threonine 849. The segment at 858–864 is trigger loop; that stretch reads TWLTASN. Residues serine 863 and arginine 869 each contribute to the RNA site. The Pol A motif lies at 887-896; that stretch reads VGADVDSQEL. The a 2'-deoxyribonucleoside 5'-triphosphate site is built by aspartate 890, valine 891, serine 893, glutamate 895, arginine 943, lysine 947, and tyrosine 951. The Mg(2+) site is built by aspartate 890 and valine 891. The short motif at 943–958 is the Pol B element; sequence REHAKIFNYGRIYGAG. The DNA site is built by threonine 1094 and serine 1095. The short motif at 1134–1141 is the Pol C element; it reads HDEVRYLV. Aspartate 1135 serves as a coordination point for a 2'-deoxyribonucleoside 5'-triphosphate. Mg(2+) is bound at residue aspartate 1135.

It belongs to the DNA polymerase type-A family. Heterotrimer composed of a catalytic subunit and a homodimer of accessory subunits (POLG:POLG2). Interacts with TTC3. Interacts with LIG3. It depends on Mg(2+) as a cofactor.

It localises to the mitochondrion. It is found in the mitochondrion matrix. The protein resides in the mitochondrion nucleoid. The enzyme catalyses DNA(n) + a 2'-deoxyribonucleoside 5'-triphosphate = DNA(n+1) + diphosphate. The catalysed reaction is a 3'-end 2'-deoxyribonucleotidyl-deoxyribonucleotide-DNA + H2O = a 3'-end 2'-deoxyribonucleotide-DNA + a 2'-deoxyribonucleoside 5'-phosphate + H(+). It carries out the reaction a 5'-end 2'-deoxyribose-2'-deoxyribonucleotide-DNA = (2E,4S)-4-hydroxypenten-2-al-5-phosphate + a 5'-end 5'-phospho-2'-deoxyribonucleoside-DNA + H(+). With respect to regulation, inhibited by dideoxynucleotides such as antiviral agent zalcitabine. Functionally, catalytic subunit of DNA polymerase gamma solely responsible for replication of mitochondrial DNA (mtDNA). Replicates both heavy and light strands of the circular mtDNA genome using a single-stranded DNA template, RNA primers and the four deoxyribonucleoside triphosphates as substrates. Has 5' -&gt; 3' polymerase activity. Functionally interacts with TWNK and SSBP1 at the replication fork to form a highly processive replisome, where TWNK unwinds the double-stranded DNA template prior to replication and SSBP1 covers the parental heavy strand to enable continuous replication of the entire mitochondrial genome. A single nucleotide incorporation cycle includes binding of the incoming nucleotide at the insertion site, a phosphodiester bond formation reaction that extends the 3'-end of the primer DNA, and translocation of the primer terminus to the post-insertion site. After completing replication of a mtDNA strand, mediates 3' -&gt; 5' exonucleolytic degradation at the nick to enable proper ligation. Highly accurate due to high nucleotide selectivity and 3' -&gt; 5' exonucleolytic proofreading. Proficiently corrects base substitutions, single-base additions and deletions in non-repetitive sequences and short repeats, but displays lower proofreading activity when replicating longer homopolymeric stretches. Exerts exonuclease activity toward single-stranded DNA and double-stranded DNA containing 3'-terminal mispairs. When a misincorporation occurs, transitions from replication to a pro-nucleolytic editing mode and removes the missincorporated nucleoside in the exonuclease active site. Proceeds via an SN2 nucleolytic mechanism in which Asp-198 catalyzes phosphodiester bond hydrolysis and Glu-200 stabilizes the leaving group. As a result the primer strand becomes one nucleotide shorter and is positioned in the post-insertion site, ready to resume DNA synthesis. Exerts 5'-deoxyribose phosphate (dRP) lyase activity and mediates repair-associated mtDNA synthesis (gap filling) in base-excision repair pathway. Catalyzes the release of the 5'-terminal 2-deoxyribose-5-phosphate sugar moiety from incised apurinic/apyrimidinic (AP) sites to produce a substrate for DNA ligase. The dRP lyase reaction does not require divalent metal ions and likely proceeds via a Schiff base intermediate in a beta-elimination reaction mechanism. The chain is DNA polymerase subunit gamma-1 from Homo sapiens (Human).